Here is a 207-residue protein sequence, read N- to C-terminus: Ribosomal RNA small subunit methyltransferase G (207 aa).

S-adenosyl-L-methionine is bound by residues Gly73, Leu78, 124-125, and Arg139; that span reads VE.

The protein belongs to the methyltransferase superfamily. RNA methyltransferase RsmG family.

The protein resides in the cytoplasm. It carries out the reaction guanosine(527) in 16S rRNA + S-adenosyl-L-methionine = N(7)-methylguanosine(527) in 16S rRNA + S-adenosyl-L-homocysteine. In terms of biological role, specifically methylates the N7 position of guanine in position 527 of 16S rRNA. This Shigella flexneri protein is Ribosomal RNA small subunit methyltransferase G.